The chain runs to 101 residues: MLKKNGFIVWPVYFDSTKPRKWRRVPRKLAVEKPTLSEIVEAVKREGFSFTVEENAKHPAYWYEVQGRVIVQANVKKSVLLKKIAENLQKIRAEQSSKRRR.

This sequence belongs to the SRP19 family. In terms of assembly, part of the signal recognition particle protein translocation system, which is composed of SRP and FtsY. Archaeal SRP consists of a 7S RNA molecule of 300 nucleotides and two protein subunits: SRP54 and SRP19.

The protein localises to the cytoplasm. In terms of biological role, involved in targeting and insertion of nascent membrane proteins into the cytoplasmic membrane. Binds directly to 7S RNA and mediates binding of the 54 kDa subunit of the SRP. The chain is Signal recognition particle 19 kDa protein from Thermofilum pendens (strain DSM 2475 / Hrk 5).